The primary structure comprises 80 residues: Large ribosomal subunit protein bL31B (80 aa).

This sequence belongs to the bacterial ribosomal protein bL31 family. Type B subfamily. As to quaternary structure, part of the 50S ribosomal subunit.

This chain is Large ribosomal subunit protein bL31B, found in Oenococcus oeni (strain ATCC BAA-331 / PSU-1).